Consider the following 380-residue polypeptide: ATP phosphoribosyltransferase regulatory subunit (380 aa).

Belongs to the class-II aminoacyl-tRNA synthetase family. HisZ subfamily. In terms of assembly, heteromultimer composed of HisG and HisZ subunits.

The protein localises to the cytoplasm. Its pathway is amino-acid biosynthesis; L-histidine biosynthesis; L-histidine from 5-phospho-alpha-D-ribose 1-diphosphate: step 1/9. Required for the first step of histidine biosynthesis. May allow the feedback regulation of ATP phosphoribosyltransferase activity by histidine. The chain is ATP phosphoribosyltransferase regulatory subunit from Thermoanaerobacter pseudethanolicus (strain ATCC 33223 / 39E) (Clostridium thermohydrosulfuricum).